Reading from the N-terminus, the 346-residue chain is Histidinol-phosphate aminotransferase (346 aa).

Lys-206 is modified (N6-(pyridoxal phosphate)lysine).

Belongs to the class-II pyridoxal-phosphate-dependent aminotransferase family. Histidinol-phosphate aminotransferase subfamily. As to quaternary structure, homodimer. Pyridoxal 5'-phosphate serves as cofactor.

It carries out the reaction L-histidinol phosphate + 2-oxoglutarate = 3-(imidazol-4-yl)-2-oxopropyl phosphate + L-glutamate. The protein operates within amino-acid biosynthesis; L-histidine biosynthesis; L-histidine from 5-phospho-alpha-D-ribose 1-diphosphate: step 7/9. This chain is Histidinol-phosphate aminotransferase, found in Bacteroides thetaiotaomicron (strain ATCC 29148 / DSM 2079 / JCM 5827 / CCUG 10774 / NCTC 10582 / VPI-5482 / E50).